We begin with the raw amino-acid sequence, 329 residues long: Tryptophan--tRNA ligase (329 aa).

Residues 9–11 (QPS) and 17–18 (GN) contribute to the ATP site. A 'HIGH' region motif is present at residues 10-18 (PSGTITLGN). Asp-132 contributes to the L-tryptophan binding site. ATP contacts are provided by residues 144–146 (GDD), Val-183, and 192–196 (KMSKS). Residues 192 to 196 (KMSKS) carry the 'KMSKS' region motif.

The protein belongs to the class-I aminoacyl-tRNA synthetase family. Homodimer.

Its subcellular location is the cytoplasm. It catalyses the reaction tRNA(Trp) + L-tryptophan + ATP = L-tryptophyl-tRNA(Trp) + AMP + diphosphate + H(+). Functionally, catalyzes the attachment of tryptophan to tRNA(Trp). The protein is Tryptophan--tRNA ligase of Bacillus anthracis.